The following is a 289-amino-acid chain: G1/S-specific cyclin-D2 (289 aa).

The Cyclin N-terminal domain occupies Val-26 to Leu-151. The interval Asp-264–Leu-289 is disordered. Ser-271 carries the post-translational modification Phosphoserine. Thr-280 bears the Phosphothreonine mark.

This sequence belongs to the cyclin family. Cyclin D subfamily. Interacts with either CDK4 or CDK6 protein kinase to form a serine/threonine kinase holoenzyme complex. The cyclin subunit imparts substrate specificity to the complex. In terms of processing, phosphorylation at Thr-280 by MAP kinases is required for ubiquitination and degradation by the DCX(AMBRA1) complex. Ubiquitinated by the DCX(AMBRA1) complex during the transition from G1 to S cell phase, leading to its degradation: ubiquitination is dependent on Thr-280 phosphorylation. The DCX(AMBRA1) complex represents the major regulator of CCND2 stability during the G1/S transition. Polyubiquitinated by the SCF(FBXL2) complex, leading to proteasomal degradation.

It is found in the nucleus. The protein resides in the cytoplasm. The protein localises to the nucleus membrane. In terms of biological role, regulatory component of the cyclin D2-CDK4 (DC) complex that phosphorylates and inhibits members of the retinoblastoma (RB) protein family including RB1 and regulates the cell-cycle during G(1)/S transition. Phosphorylation of RB1 allows dissociation of the transcription factor E2F from the RB/E2F complex and the subsequent transcription of E2F target genes which are responsible for the progression through the G(1) phase. Hypophosphorylates RB1 in early G(1) phase. Cyclin D-CDK4 complexes are major integrators of various mitogenenic and antimitogenic signals. The chain is G1/S-specific cyclin-D2 (CCND2) from Bos taurus (Bovine).